Here is a 562-residue protein sequence, read N- to C-terminus: Furostanol glycoside 26-O-beta-glucosidase (562 aa).

Residues 1 to 44 (MAAQLGLPLVSCHRGASQAASSSAHLVPGASAIMQAGNRRQKMR) constitute a chloroplast transit peptide. Residues Gln110, His214, and 259-260 (NE) contribute to the a beta-D-glucoside site. Residue Glu260 is the Proton donor of the active site. Cys279 and Cys285 are disulfide-bonded. Residues Tyr401, Glu472, Trp518, 525–526 (EW), and Phe534 each bind a beta-D-glucoside. Glu472 functions as the Nucleophile in the catalytic mechanism.

Belongs to the glycosyl hydrolase 1 family. In terms of assembly, heterodimer. The N-terminus of the larger subunit is blocked and the smaller subunit might be derived from the larger one.

It localises to the plastid. Its subcellular location is the chloroplast. The catalysed reaction is protodioscin + H2O = 26-deglucoprotodioscin + D-glucose. With respect to regulation, partially inhibited by glucono-1,5-lactone, conduritol beta-epoxide and diosgenin, but not by beta-sitosterol or cholesterol. In terms of biological role, beta-glucosidase involved in saponin metabolism. Highly specific for the cleavage of C-26-bound glucose moiety of furostanol glycosides such as protogracillin and protodioscin. No activity with nuatigenin glycoside. Convers furostanol glycosides to spirostanol glycosides. The sequence is that of Furostanol glycoside 26-O-beta-glucosidase from Hellenia speciosa (Crepe ginger).